The following is a 120-amino-acid chain: NAD(P)H-quinone oxidoreductase subunit 3, chloroplastic (120 aa).

The next 3 helical transmembrane spans lie at 9-29 (FFWA…FISG), 64-84 (MFAL…PWAM), and 88-108 (VLGV…IIGL).

The protein belongs to the complex I subunit 3 family. As to quaternary structure, NDH is composed of at least 16 different subunits, 5 of which are encoded in the nucleus.

It localises to the plastid. It is found in the chloroplast thylakoid membrane. It carries out the reaction a plastoquinone + NADH + (n+1) H(+)(in) = a plastoquinol + NAD(+) + n H(+)(out). The enzyme catalyses a plastoquinone + NADPH + (n+1) H(+)(in) = a plastoquinol + NADP(+) + n H(+)(out). In terms of biological role, NDH shuttles electrons from NAD(P)H:plastoquinone, via FMN and iron-sulfur (Fe-S) centers, to quinones in the photosynthetic chain and possibly in a chloroplast respiratory chain. The immediate electron acceptor for the enzyme in this species is believed to be plastoquinone. Couples the redox reaction to proton translocation, and thus conserves the redox energy in a proton gradient. The chain is NAD(P)H-quinone oxidoreductase subunit 3, chloroplastic from Atropa belladonna (Belladonna).